We begin with the raw amino-acid sequence, 460 residues long: Serine--tRNA ligase (460 aa).

Over residues 50-65 (DRNEVSSKIGELKQAG) the composition is skewed to basic and acidic residues. 2 disordered regions span residues 50 to 71 (DRNE…DAAQ) and 109 to 129 (PDED…RREG). Residues 109–121 (PDEDAPVGDSEAE) show a composition bias toward acidic residues. 241–243 (TAE) contributes to the L-serine binding site. ATP-binding positions include 272-274 (RRE) and V288. E295 provides a ligand contact to L-serine. 368-371 (EVSS) is an ATP binding site. An L-serine-binding site is contributed by S404.

This sequence belongs to the class-II aminoacyl-tRNA synthetase family. Type-1 seryl-tRNA synthetase subfamily. In terms of assembly, homodimer. The tRNA molecule binds across the dimer.

The protein localises to the cytoplasm. It catalyses the reaction tRNA(Ser) + L-serine + ATP = L-seryl-tRNA(Ser) + AMP + diphosphate + H(+). The catalysed reaction is tRNA(Sec) + L-serine + ATP = L-seryl-tRNA(Sec) + AMP + diphosphate + H(+). It functions in the pathway aminoacyl-tRNA biosynthesis; selenocysteinyl-tRNA(Sec) biosynthesis; L-seryl-tRNA(Sec) from L-serine and tRNA(Sec): step 1/1. Catalyzes the attachment of serine to tRNA(Ser). Is also able to aminoacylate tRNA(Sec) with serine, to form the misacylated tRNA L-seryl-tRNA(Sec), which will be further converted into selenocysteinyl-tRNA(Sec). The protein is Serine--tRNA ligase of Halobacterium salinarum (strain ATCC 29341 / DSM 671 / R1).